Here is a 429-residue protein sequence, read N- to C-terminus: Enolase (429 aa).

Gln-162 is a binding site for (2R)-2-phosphoglycerate. Glu-204 acts as the Proton donor in catalysis. Residues Asp-241, Glu-283, and Asp-310 each contribute to the Mg(2+) site. (2R)-2-phosphoglycerate-binding residues include Lys-335, Arg-364, Ser-365, and Lys-386. Lys-335 (proton acceptor) is an active-site residue.

Belongs to the enolase family. Mg(2+) serves as cofactor.

The protein resides in the cytoplasm. It is found in the secreted. It localises to the cell surface. It carries out the reaction (2R)-2-phosphoglycerate = phosphoenolpyruvate + H2O. It functions in the pathway carbohydrate degradation; glycolysis; pyruvate from D-glyceraldehyde 3-phosphate: step 4/5. Catalyzes the reversible conversion of 2-phosphoglycerate (2-PG) into phosphoenolpyruvate (PEP). It is essential for the degradation of carbohydrates via glycolysis. The sequence is that of Enolase from Mycolicibacterium gilvum (strain PYR-GCK) (Mycobacterium gilvum (strain PYR-GCK)).